The following is a 195-amino-acid chain: MIMAQNAKHRVPFRRRREGKTDFRQRLGLLLSGKPRLVARKSLNNIIAQLMAYDEKGDIVLVSAHSRELVKMGYKGHCGNLPAAYLTGLLLGKKAVEEGLEEAILDKGLHRATKGAAIFAVLKGALDAGMDIPCGEEIIADEERLNGTHIKQYAELLKEDEEAYKKQFSKYLEKGLNPEDLPEHFEELKGKILNL.

It belongs to the universal ribosomal protein uL18 family. As to quaternary structure, part of the 50S ribosomal subunit. Contacts the 5S and 23S rRNAs.

Functionally, this is one of the proteins that bind and probably mediate the attachment of the 5S RNA into the large ribosomal subunit, where it forms part of the central protuberance. The chain is Large ribosomal subunit protein uL18 from Methanococcus vannielii.